The primary structure comprises 198 residues: Probable opine utilization operon repressor (198 aa).

Its pathway is opine metabolism; mannopine biosynthesis [regulation]. Possible repressor for genes for mannityl-opine utilization and / or plasmid conjugative transfer. The polypeptide is Probable opine utilization operon repressor (opnR) (Rhizobium rhizogenes (Agrobacterium rhizogenes)).